The primary structure comprises 359 residues: MMP endo-(1,4)-3-O-methyl-alpha-D-mannosidase (359 aa).

In terms of assembly, monomer in solution.

It carries out the reaction Endohydrolysis of 3-O-methyl-alpha-D-mannosyl-(1-&gt;4)-3-O-methyl-D-mannose linkages within (1,4)-3-O-methyl-alpha-D-mannnan substrates.. Its function is as follows. Hydrolase involved in the biosynthesis of 3-O-methylmannose polysaccharides (MMP), which are intracellular polymethylated polysaccharides implicated in the modulation of fatty acid metabolism in non-tuberculous mycobacteria. Highly specific hydrolase that catalyzes the internal cleavage of MMP. Is able to hydrolyze purified MMP into distinct lower order oligomannosides but does not cleave acylated or deacylated forms of 6-O-methylglucose lipopolysaccharide (MGLP), beta-mannans, synthetic 4alpha-oligomannosides or its own reaction products. Products were identified as four distinct oligomannosides differing in the number of mannose units (4 to 8) and methylation pattern (free or methylated C1-OH). Might serve as a recycling enzyme that hydrolyzes mature MMP into defined-size smaller oligomannosides that are, in turn, substrates for ManT and MeT1 activities for further processing into new daughter MMP chains. This is MMP endo-(1,4)-3-O-methyl-alpha-D-mannosidase from Mycolicibacterium hassiacum (strain DSM 44199 / CIP 105218 / JCM 12690 / 3849) (Mycobacterium hassiacum).